A 608-amino-acid chain; its full sequence is Actin-related protein 8 (608 aa).

The segment at 1–20 (MQRSRASSTSSGRLQASQQV) is disordered. An ATP-binding site is contributed by 272–275 (DIGA).

This sequence belongs to the actin family. ARP8 subfamily. Component of the chromatin remodeling Ino80 complex. Exists as monomers and dimers, but the dimer is most probably the biologically relevant form required for stable interactions with histones that exploits the twofold symmetry of the nucleosome core.

The protein resides in the nucleus. In terms of biological role, plays an important role in the functional organization of mitotic chromosomes. Exhibits low basal ATPase activity, and unable to polymerize. Proposed core component of the chromatin remodeling INO80 complex which is involved in transcriptional regulation, DNA replication and probably DNA repair. Strongly prefer nucleosomes and H3-H4 tetramers over H2A-H2B dimers, suggesting it may act as a nucleosome recognition module within the complex. In Drosophila pseudoobscura pseudoobscura (Fruit fly), this protein is Actin-related protein 8.